The chain runs to 134 residues: DNA-binding protein StpA (134 aa).

A disordered region spans residues 73-94; sequence EELLGNSSAAAPRAGKKRQPRP. Residues 112–117 mediate DNA binding; it reads QGRTPK.

It belongs to the histone-like protein H-NS family. In terms of assembly, forms homodimers, can interact with H-NS. May interact with Hha and/or Cnu.

It localises to the cytoplasm. The protein resides in the nucleoid. Functionally, a DNA-binding protein that acts in a fashion similar to H-NS, repressing gene transcription. A subset of H-NS/StpA-regulated genes require auxillary proteins for repression; these auxillary proteins (Hha and other similar proteins) may also modulate oligomerization of the H-NS/StpA complex. This Escherichia coli O157:H7 protein is DNA-binding protein StpA (stpA).